Consider the following 331-residue polypeptide: N-arachidonyl glycine receptor (331 aa).

Residues 1-26 (MITLNNQDQPVPFNSSHPDEYKIAAL) lie on the Extracellular side of the membrane. The N-linked (GlcNAc...) asparagine glycan is linked to Asn14. Residues 27–47 (VFYSCIFIIGLFVNITALWVF) form a helical membrane-spanning segment. The Cytoplasmic portion of the chain corresponds to 48–56 (SCTTKKRTT). A helical transmembrane segment spans residues 57–77 (VTIYMMNVALVDLIFIMTLPF). The Extracellular portion of the chain corresponds to 78 to 95 (RMFYYAKDEWPFGEYFCQ). Residues Cys94 and Cys172 are joined by a disulfide bond. Residues 96 to 116 (ILGALTVFYPSIALWLLAFIS) traverse the membrane as a helical segment. Residues 117-138 (ADRYMAIVQPKYAKELKNTCKA) are Cytoplasmic-facing. A helical transmembrane segment spans residues 139-159 (VLACVGVWIMTLTTTTPLLLL). The Extracellular segment spans residues 160–191 (YKDPDKDSTPATCLKISDIIYLKAVNVLNLTR). Residues 192-212 (LTFFFLIPLFIMIGCYLVIIH) form a helical membrane-spanning segment. The Cytoplasmic segment spans residues 213–232 (NLLHGRTSKLKPKVKEKSIR). The helical transmembrane segment at 233–253 (IIITLLVQVLVCFMPFHICFA) threads the bilayer. Residues 254–268 (FLMLGTGENSYNPWG) are Extracellular-facing. The chain crosses the membrane as a helical span at residues 269 to 289 (AFTTFLMNLSTCLDVILYYIV). Residues 290-331 (SKQFQARVISVMLYRNYLRSMRRKSFRSGSLRSLSNINSEML) lie on the Cytoplasmic side of the membrane. The residue at position 322 (Ser322) is a Phosphoserine.

It belongs to the G-protein coupled receptor 1 family. In terms of tissue distribution, expressed in midpiece of spermatozoon (at protein level). Most abundant in testis and spleen. Highly expressed in CD4 and CD8-positive T-cells as well as CD19-positive B-cells.

The protein localises to the cell membrane. It localises to the cytoplasmic vesicle membrane. G protein-coupled receptor (GPCR) that plays a role in diverse physiological processes particularly within the immune and nervous systems. Becomes active when triggered by various endogenous ligands including endocannabinoid N-arachidonyl glycine (NAGly), delta-9-tetrahydrocannabinol or resolvin D2/RvD2 derived from the omega-3 fatty acid docosahexaenoic acid (DHA). Upon RvD2 binding, facilitates the resolution of inflammation, aiding in tissue repair and homeostasis. Mechanistically, RvD2 ligation initiates Galphas protein coupling, activation of cAMP-PKA signaling pathway and phosphorylation of STAT3, leading to RvD2-stimulated macrophage phagocytosis. Mediates NAGly-induced process of reorganization of actin filaments and induction of acrosomal exocytosis. Activation by N-arachidonoyl glycine (NAGly) can also induce apoptosis in macrophages. Plays a role in homeostasis of CD8+ subsets of intraepithelial lymphocytes (IELs) (CD8alphaalpha and CD8alphabeta IELs) in small intestine by supporting preferential migration of CD8alphaalpha T-cells to intraepithelial compartment over lamina propria compartment, and by mediating their reconstitution into small intestine after bone marrow transplant. Also participates in hypotensive responses, mediating reduction in intraocular and blood pressure. This is N-arachidonyl glycine receptor (GPR18) from Homo sapiens (Human).